The chain runs to 180 residues: Large ribosomal subunit protein uL5 (180 aa).

It belongs to the universal ribosomal protein uL5 family. Part of the 50S ribosomal subunit; part of the 5S rRNA/L5/L18/L25 subcomplex. Contacts the 5S rRNA and the P site tRNA. Forms a bridge to the 30S subunit in the 70S ribosome.

This is one of the proteins that bind and probably mediate the attachment of the 5S RNA into the large ribosomal subunit, where it forms part of the central protuberance. In the 70S ribosome it contacts protein S13 of the 30S subunit (bridge B1b), connecting the 2 subunits; this bridge is implicated in subunit movement. Contacts the P site tRNA; the 5S rRNA and some of its associated proteins might help stabilize positioning of ribosome-bound tRNAs. This chain is Large ribosomal subunit protein uL5, found in Anaeromyxobacter sp. (strain Fw109-5).